Reading from the N-terminus, the 430-residue chain is Potassium channel subfamily K member 12 (430 aa).

Topologically, residues 1 to 38 (MSSRSPRPPPRRCRRRLPRPSCCCCCCRRSHLNEDTGR) are cytoplasmic. Residues 11–16 (RRCRRR) form an ER retention/retrieval signal region. Residues 39–59 (FVLLAALIGLYLVAGATVFSA) traverse the membrane as a helical segment. N-linked (GlcNAc...) asparagine glycosylation is present at Asn-78. The pore-forming intramembrane region spans 114-134 (WDFPGAFYFVGTVVSTIGFGM). K(+)-binding residues include Thr-129, Ile-130, and Gly-131. Positions 129-134 (TIGFGM) are selectivity filter 1. A helical transmembrane segment spans residues 145–165 (FLIAYGLFGCAGTILFFNLFL). The Cytoplasmic portion of the chain corresponds to 166–212 (ERIISLLAFIMRACRERQLRRSGLLPATFRRGSALSEADSLAGWKPS). Residues 213–233 (VYHVLLILGLFAVLLACCASA) traverse the membrane as a helical segment. The segment at residues 243–263 (YVDSLYFCFVTFSTIGFGDLV) is an intramembrane region (pore-forming). Thr-256, Ile-257, Gly-258, and Phe-259 together coordinate K(+). The tract at residues 256 to 261 (TIGFGD) is selectivity filter 2. Residues 282–302 (LFILLGVCCIYSLFNVISILI) traverse the membrane as a helical segment. The Cytoplasmic portion of the chain corresponds to 303–430 (KQVLNWMLRK…NRLAETSASR (128 aa)).

This sequence belongs to the two pore domain potassium channel (TC 1.A.1.8) family. In terms of assembly, homodimer. Heterodimer with KCNK13. Highly expressed in most brain regions. Also expressed in other tissues such as lung, kidney, liver, stomach and spleen.

Its subcellular location is the cell membrane. The protein localises to the endoplasmic reticulum membrane. It catalyses the reaction K(+)(in) = K(+)(out). Its function is as follows. K(+) channel subunit that may homo- and heterodimerize to form functional channels with distinct regulatory and gating properties. Can heterodimerize with KCNK13 subunit to conduct K(+) outward rectifying currents at the plasma membrane. The homodimers are mainly retained in the endoplasmic reticulum compartment and may be targeted to the cell surface upon phosphorylation or other activation signals yet to be elucidated. The chain is Potassium channel subfamily K member 12 (Kcnk12) from Rattus norvegicus (Rat).